Reading from the N-terminus, the 340-residue chain is 4-hydroxy-2-oxovalerate aldolase (340 aa).

One can recognise a Pyruvate carboxyltransferase domain in the interval 8 to 260 (VILHDMSLRD…HHGVNLYDIM (253 aa)). Substrate is bound at residue 16–17 (RD). A Mn(2+)-binding site is contributed by Asp-17. The active-site Proton acceptor is His-20. Substrate-binding residues include Ser-170 and His-199. Residues His-199 and His-201 each contribute to the Mn(2+) site. Tyr-290 is a binding site for substrate.

Belongs to the 4-hydroxy-2-oxovalerate aldolase family.

The enzyme catalyses (S)-4-hydroxy-2-oxopentanoate = acetaldehyde + pyruvate. In Shewanella halifaxensis (strain HAW-EB4), this protein is 4-hydroxy-2-oxovalerate aldolase.